A 224-amino-acid polypeptide reads, in one-letter code: MKDVKRIDYFSYEELTILGGSKLPLVNFELFDPSNFEEAKAALIEKELVTENDKLTDAGFKVATLVREYISAIVNIRINDMYFAPFSYEKDEYILLSRFKNNGFQIRIINKDIAWWSIVQSYPLLMRQEKSNDWDFKQIDDETLENLNNESIDTIGRVLEIEIYNHQGDPQQSLYNIYEQNDLLFIRYPLKDKVLNVHIGVINTFIRELFGFDTDENHINKAEE.

Interacts with EssD.

Its function is as follows. Component of the type VII secretion system (Ess). Plays a role in Esx protein secretion. Plays an essential role in the processing and secretion of EssD. The sequence is that of Type VII secretion system protein EsaE from Staphylococcus aureus (strain USA300).